The sequence spans 325 residues: Elongation factor P--(R)-beta-lysine ligase (325 aa).

76 to 78 (SPE) is a binding site for substrate. ATP is bound by residues 100–102 (RNE) and Asn-109. Substrate is bound at residue Tyr-118. 244-245 (EL) provides a ligand contact to ATP. Glu-251 lines the substrate pocket. Gly-300 provides a ligand contact to ATP.

The protein belongs to the class-II aminoacyl-tRNA synthetase family. EpmA subfamily. In terms of assembly, homodimer.

It catalyses the reaction D-beta-lysine + L-lysyl-[protein] + ATP = N(6)-((3R)-3,6-diaminohexanoyl)-L-lysyl-[protein] + AMP + diphosphate + H(+). Functionally, with EpmB is involved in the beta-lysylation step of the post-translational modification of translation elongation factor P (EF-P). Catalyzes the ATP-dependent activation of (R)-beta-lysine produced by EpmB, forming a lysyl-adenylate, from which the beta-lysyl moiety is then transferred to the epsilon-amino group of a conserved specific lysine residue in EF-P. The sequence is that of Elongation factor P--(R)-beta-lysine ligase from Yersinia enterocolitica serotype O:8 / biotype 1B (strain NCTC 13174 / 8081).